The sequence spans 360 residues: 3-dehydroquinate synthase (360 aa).

NAD(+) contacts are provided by residues 70 to 75, 128 to 129, lysine 141, and lysine 150; these read DGESLK and TT. The Zn(2+) site is built by glutamate 182, histidine 243, and histidine 259.

Belongs to the sugar phosphate cyclases superfamily. Dehydroquinate synthase family. Requires NAD(+) as cofactor. Co(2+) is required as a cofactor. Zn(2+) serves as cofactor.

It is found in the cytoplasm. The enzyme catalyses 7-phospho-2-dehydro-3-deoxy-D-arabino-heptonate = 3-dehydroquinate + phosphate. The protein operates within metabolic intermediate biosynthesis; chorismate biosynthesis; chorismate from D-erythrose 4-phosphate and phosphoenolpyruvate: step 2/7. Catalyzes the conversion of 3-deoxy-D-arabino-heptulosonate 7-phosphate (DAHP) to dehydroquinate (DHQ). This chain is 3-dehydroquinate synthase, found in Thermoplasma volcanium (strain ATCC 51530 / DSM 4299 / JCM 9571 / NBRC 15438 / GSS1).